Here is a 130-residue protein sequence, read N- to C-terminus: U-scoloptoxin(17)-Er1a (130 aa).

Positions 1–18 (MKLLVFALFLQVVQLSLA) are cleaved as a signal peptide.

The protein belongs to the scoloptoxin-17 family. In terms of processing, contains 4 disulfide bonds. As to expression, expressed by the venom gland.

Its subcellular location is the secreted. This Ethmostigmus rubripes (Giant centipede) protein is U-scoloptoxin(17)-Er1a.